Here is a 166-residue protein sequence, read N- to C-terminus: NADH-quinone oxidoreductase subunit A (166 aa).

3 helical membrane-spanning segments follow: residues 16–36, 68–88, and 98–118; these read FAVF…GAYF, FYLV…LYAW, and IGFI…FYLV. A disordered region spans residues 141 to 166; the sequence is RYASSHPQDISQELSVAGSQQANESR.

Belongs to the complex I subunit 3 family. As to quaternary structure, NDH-1 is composed of 13 different subunits. Subunits NuoA, H, J, K, L, M, N constitute the membrane sector of the complex.

The protein resides in the cell inner membrane. It carries out the reaction a quinone + NADH + 5 H(+)(in) = a quinol + NAD(+) + 4 H(+)(out). Its function is as follows. NDH-1 shuttles electrons from NADH, via FMN and iron-sulfur (Fe-S) centers, to quinones in the respiratory chain. The immediate electron acceptor for the enzyme in this species is believed to be ubiquinone. Couples the redox reaction to proton translocation (for every two electrons transferred, four hydrogen ions are translocated across the cytoplasmic membrane), and thus conserves the redox energy in a proton gradient. The chain is NADH-quinone oxidoreductase subunit A from Yersinia pseudotuberculosis serotype O:1b (strain IP 31758).